The sequence spans 1093 residues: Semaphorin-5B (1093 aa).

A signal peptide spans 1–19; sequence MVVPGPLALSLLLSSLTLL. The Extracellular segment spans residues 20–978; the sequence is VSHLSSSQDI…TSCGGFNLIH (959 aa). The Sema domain occupies 45–495; that stretch reads HPIVAFEDLK…LSDRVLRVPL (451 aa). Residues Asn-59 and Asn-95 are each glycosylated (N-linked (GlcNAc...) asparagine). Cystine bridges form between Cys-114-Cys-124 and Cys-141-Cys-150. N-linked (GlcNAc...) asparagine glycans are attached at residues Asn-157, Asn-178, and Asn-287. 2 disulfides stabilise this stretch: Cys-264-Cys-367 and Cys-288-Cys-330. Residues Asn-333, Asn-378, Asn-532, Asn-539, Asn-547, and Asn-602 are each glycosylated (N-linked (GlcNAc...) asparagine). TSP type-1 domains lie at 551-605, 606-662, 664-713, 721-776, 795-850, 852-907, and 908-952; these read DGGF…NCSR, NGAW…TPCP, PIFW…EACP, WTPW…ACDT, NGGW…QACP, RGAW…QACP, and EGWS…RPCP. Intrachain disulfides connect Cys-618–Cys-655, Cys-622–Cys-661, Cys-633–Cys-645, Cys-676–Cys-707, Cys-680–Cys-712, and Cys-691–Cys-697. The N-linked (GlcNAc...) asparagine glycan is linked to Asn-728. 6 disulfides stabilise this stretch: Cys-807-Cys-844, Cys-811-Cys-849, Cys-822-Cys-834, Cys-864-Cys-901, Cys-868-Cys-906, and Cys-879-Cys-891. The N-linked (GlcNAc...) asparagine glycan is linked to Asn-944. A helical membrane pass occupies residues 979-999; the sequence is LIVTGVSCFLVSGLLTLAVYL. Topologically, residues 1000-1093 are cytoplasmic; it reads SCQHCQRQSQ…SPGQRCFPNS (94 aa).

It belongs to the semaphorin family. In adult, only detected in brain.

It is found in the membrane. May act as a positive axonal guidance cue. The chain is Semaphorin-5B (Sema5b) from Mus musculus (Mouse).